The primary structure comprises 215 residues: Pyrrolidone-carboxylate peptidase (215 aa).

Residues glutamate 78, cysteine 141, and histidine 165 contribute to the active site.

It belongs to the peptidase C15 family. In terms of assembly, homotetramer.

The protein resides in the cytoplasm. The enzyme catalyses Release of an N-terminal pyroglutamyl group from a polypeptide, the second amino acid generally not being Pro.. Its function is as follows. Removes 5-oxoproline from various penultimate amino acid residues except L-proline. The protein is Pyrrolidone-carboxylate peptidase of Lacticaseibacillus paracasei (strain ATCC 334 / BCRC 17002 / CCUG 31169 / CIP 107868 / KCTC 3260 / NRRL B-441) (Lactobacillus paracasei).